The primary structure comprises 366 residues: Histidinol-phosphate aminotransferase 2 (366 aa).

The segment covering 1–11 (MQVKDQLSSLQ) has biased composition (polar residues). The interval 1-21 (MQVKDQLSSLQPYKPGKSPEQ) is disordered. Lys-222 bears the N6-(pyridoxal phosphate)lysine mark.

Belongs to the class-II pyridoxal-phosphate-dependent aminotransferase family. Histidinol-phosphate aminotransferase subfamily. Homodimer. Requires pyridoxal 5'-phosphate as cofactor.

The catalysed reaction is L-histidinol phosphate + 2-oxoglutarate = 3-(imidazol-4-yl)-2-oxopropyl phosphate + L-glutamate. It functions in the pathway amino-acid biosynthesis; L-histidine biosynthesis; L-histidine from 5-phospho-alpha-D-ribose 1-diphosphate: step 7/9. This Bacillus thuringiensis subsp. konkukian (strain 97-27) protein is Histidinol-phosphate aminotransferase 2.